A 122-amino-acid polypeptide reads, in one-letter code: Large ribosomal subunit protein uL14 (122 aa).

This sequence belongs to the universal ribosomal protein uL14 family. In terms of assembly, part of the 50S ribosomal subunit. Forms a cluster with proteins L3 and L19. In the 70S ribosome, L14 and L19 interact and together make contacts with the 16S rRNA in bridges B5 and B8.

In terms of biological role, binds to 23S rRNA. Forms part of two intersubunit bridges in the 70S ribosome. This is Large ribosomal subunit protein uL14 from Leptothrix cholodnii (strain ATCC 51168 / LMG 8142 / SP-6) (Leptothrix discophora (strain SP-6)).